A 438-amino-acid chain; its full sequence is Coenzyme A disulfide reductase (438 aa).

8-33 (GAVAGGATCASQIRRLDKESDIIIFE) lines the FAD pocket. 5 residues coordinate substrate: T15, Q19, R22, S39, and N42. The active-site Nucleophile is the C43. C43 functions as the Redox-active in the catalytic mechanism. Residue K71 coordinates substrate. 151–166 (VLVVGAGYVSLEVLEN) provides a ligand contact to NADP(+). 267–277 (TNVPNIYAIGD) provides a ligand contact to FAD. Residue H299 coordinates substrate. Residue Y419 participates in FAD binding. Residue K427 participates in substrate binding.

It belongs to the class-III pyridine nucleotide-disulfide oxidoreductase family. As to quaternary structure, homodimer. The cofactor is FAD.

The catalysed reaction is NADP(+) + 2 CoA = CoA-disulfide + NADPH + H(+). Functionally, catalyzes specifically the NADPH-dependent reduction of coenzyme A disulfide. The sequence is that of Coenzyme A disulfide reductase from Staphylococcus aureus (strain bovine RF122 / ET3-1).